The primary structure comprises 366 residues: Galactoside alpha-(1,2)-fucosyltransferase 1 (366 aa).

Over 1 to 8 (MWPLSHRH) the chain is Cytoplasmic. The helical; Signal-anchor for type II membrane protein transmembrane segment at 9–25 (LCLAFLLVCVLSAISFF) threads the bilayer. Residues 26-366 (LHVHQDSFRH…LSPLWTLAEP (341 aa)) are Lumenal-facing. 3 N-linked (GlcNAc...) asparagine glycosylation sites follow: N66, N302, and N328.

It belongs to the glycosyltransferase 11 family.

It is found in the golgi apparatus. Its subcellular location is the golgi stack membrane. The enzyme catalyses a beta-D-galactosyl-(1-&gt;4)-N-acetyl-beta-D-glucosaminyl derivative + GDP-beta-L-fucose = an alpha-L-Fuc-(1-&gt;2)-beta-D-Gal-(1-&gt;4)-beta-D-GlcNAc derivative + GDP + H(+). It carries out the reaction a ganglioside GA1 + GDP-beta-L-fucose = a ganglioside Fuc-GA1 + GDP + H(+). The catalysed reaction is a beta-D-Gal-(1-&gt;3)-beta-D-GlcNAc-(1-&gt;3)-beta-D-Gal-(1-&gt;4)-beta-D-Glc-(1&lt;-&gt;1')-Cer(d18:1(4E)) + GDP-beta-L-fucose = alpha-L-fucosyl-(1-&gt;2)- beta-D-galactosyl-(1-&gt;3)-N-acetyl-beta-D-glucosaminyl-(1-&gt;3)-beta-D-galactosyl-(1-&gt;4)-beta-D-glucosyl-(1&lt;-&gt;1')-N-acylsphing-4-enine + GDP + H(+). It catalyses the reaction a neolactoside nLc4Cer(d18:1(4E)) + GDP-beta-L-fucose = a neolactoside IV(2)-alpha-Fuc-nLc4Cer(d18:1(4E)) + GDP + H(+). The enzyme catalyses a ganglioside GM1 + GDP-beta-L-fucose = a ganglioside Fuc-GM1 + GDP + H(+). It carries out the reaction beta-D-galactosyl-(1-&gt;3)-N-acetyl-D-galactosamine + GDP-beta-L-fucose = alpha-L-fucosyl-(1-&gt;2)-beta-D-galactosyl-(1-&gt;3)-N-acetyl-D-galactosamine + GDP + H(+). Its pathway is protein modification; protein glycosylation. Its function is as follows. Catalyzes the transfer of L-fucose, from a guanosine diphosphate-beta-L-fucose, to the terminal galactose residue of glycoconjugates through an alpha(1,2) linkage leading to H antigen synthesis that is an intermediate substrate in the synthesis of ABO blood group antigens. H antigen is essential for maturation of the glomerular layer of the main olfactory bulb, in cell migration and early cell-cell contacts during tumor associated angiogenesis. Preferentially fucosylates soluble lactose and to a lesser extent fucosylates glycolipids gangliosides GA1 and GM1a. This Alouatta belzebul (Red-handed howler monkey) protein is Galactoside alpha-(1,2)-fucosyltransferase 1.